A 214-amino-acid chain; its full sequence is Peroxiredoxin-5, mitochondrial (214 aa).

The transit peptide at 1–52 (MGLAGVCALRRSAGYILVGGAGGQSAAAAARRYSEGEWASGGVRSFSRAAAA) directs the protein to the mitochondrion. The Thioredoxin domain maps to 56–214 (IKVGDAIPAV…SLAPNIISQL (159 aa)). At lysine 75 the chain carries N6-acetyllysine. At lysine 83 the chain carries N6-acetyllysine; alternate. An N6-succinyllysine; alternate modification is found at lysine 83. The Cysteine sulfenic acid (-SOH) intermediate role is filled by cysteine 100. The S-palmitoyl cysteine moiety is linked to residue cysteine 100. An intrachain disulfide couples cysteine 100 to cysteine 204. Lysine 116 is modified (N6-succinyllysine). Phosphoserine occurs at positions 171 and 182. The Microbody targeting signal motif lies at 212–214 (SQL).

Belongs to the peroxiredoxin family. Prx5 subfamily. Monomer. S-palmitoylated. Palmitoylation occurs on the active site, inhibiting its reactivity; therefore PRDX5 palmitoylation status determines its antioxidant capacity. In terms of processing, S-palmitoylated. Depalmitoylated by ABHD10. In terms of tissue distribution, widely expressed.

It localises to the mitochondrion. The protein localises to the cytoplasm. The protein resides in the peroxisome matrix. The catalysed reaction is a hydroperoxide + [thioredoxin]-dithiol = an alcohol + [thioredoxin]-disulfide + H2O. Functionally, thiol-specific peroxidase that catalyzes the reduction of hydrogen peroxide and organic hydroperoxides to water and alcohols, respectively. Plays a role in cell protection against oxidative stress by detoxifying peroxides and as sensor of hydrogen peroxide-mediated signaling events. This chain is Peroxiredoxin-5, mitochondrial, found in Homo sapiens (Human).